Reading from the N-terminus, the 700-residue chain is Non-hemolytic phospholipase C (700 aa).

Positions 1-34 form a signal peptide, tat-type signal; the sequence is MTNQNRRDFLRLAAGTAGAAALQLFPPVIREALA.

This sequence belongs to the bacterial phospholipase C family. Post-translationally, predicted to be exported by the Tat system. The position of the signal peptide cleavage has not been experimentally proven.

It carries out the reaction a 1,2-diacyl-sn-glycero-3-phosphocholine + H2O = phosphocholine + a 1,2-diacyl-sn-glycerol + H(+). Hydrolyzes phosphatidylserine as well as phosphatidylcholine. This is Non-hemolytic phospholipase C (plcN) from Burkholderia pseudomallei (strain K96243).